We begin with the raw amino-acid sequence, 717 residues long: Polyribonucleotide nucleotidyltransferase (717 aa).

Mg(2+)-binding residues include Asp-486 and Asp-492. Positions 553 to 612 (PRMITVKINPEKIRDVIGKGGSTIQALTKETGCTIDIQEDGTITIASTSSEGMAEAKRRI) constitute a KH domain. The S1 motif domain maps to 622-690 (GKIYSGTVLK…EKGRMRLSIK (69 aa)). The disordered stretch occupies residues 690 to 717 (KAAKAEEGDVPATAPQAPGAGDATSQQQ).

This sequence belongs to the polyribonucleotide nucleotidyltransferase family. Mg(2+) is required as a cofactor.

Its subcellular location is the cytoplasm. It catalyses the reaction RNA(n+1) + phosphate = RNA(n) + a ribonucleoside 5'-diphosphate. Involved in mRNA degradation. Catalyzes the phosphorolysis of single-stranded polyribonucleotides processively in the 3'- to 5'-direction. This Ralstonia nicotianae (strain ATCC BAA-1114 / GMI1000) (Ralstonia solanacearum) protein is Polyribonucleotide nucleotidyltransferase.